We begin with the raw amino-acid sequence, 105 residues long: Multidrug resistance protein EbrA (105 aa).

Helical transmembrane passes span 2–22 (IAGYIFLLIAILSEAAAAAML), 35–55 (VLVVIGYGLAFYMMSLTLQVI), 60–80 (SYATWSGAGTVLTAIIGVLWF), and 87–104 (RNIAGIICLVSGVVLINL).

The protein belongs to the drug/metabolite transporter (DMT) superfamily. Small multidrug resistance (SMR) (TC 2.A.7.1) family. EbrA/EbrB subfamily. As to quaternary structure, the efflux pump is composed of EbrA and EbrB.

The protein resides in the cell membrane. Part of a multidrug efflux pump. Confers resistance to cationic lipophilic dyes such as ethidium bromide, acriflavine, pyronine Y and safranin O. The efflux is probably coupled to an influx of protons. This Bacillus licheniformis (strain ATCC 14580 / DSM 13 / JCM 2505 / CCUG 7422 / NBRC 12200 / NCIMB 9375 / NCTC 10341 / NRRL NRS-1264 / Gibson 46) protein is Multidrug resistance protein EbrA (ebrA).